The chain runs to 321 residues: Phospho-N-acetylmuramoyl-pentapeptide-transferase (321 aa).

10 consecutive transmembrane segments (helical) span residues 1-21, 50-70, 76-96, 112-132, 140-160, 176-196, 200-220, 225-245, 250-270, and 300-320; these read MLFILAVIALLITFILVPILI, MGGLTFLISIIITSIIAIFFV, IILLLFVTIGFGLIGFIDDYI, FLAQIAIAVVFFLLSDVFHLV, IPFTNISIPLSFAYVIFIVFW, GLATGLSIIGFTMYAIMSFVL, AIGAFCIIMIFALLGFLPYNL, VFMGDTGSLALGGIFATISIM, LSLLLIGLVFVIETASVMLQV, and VVTVFWTAGLISGLIGLWIGV.

Belongs to the glycosyltransferase 4 family. MraY subfamily. It depends on Mg(2+) as a cofactor.

Its subcellular location is the cell membrane. The enzyme catalyses UDP-N-acetyl-alpha-D-muramoyl-L-alanyl-gamma-D-glutamyl-L-lysyl-D-alanyl-D-alanine + di-trans,octa-cis-undecaprenyl phosphate = Mur2Ac(oyl-L-Ala-gamma-D-Glu-L-Lys-D-Ala-D-Ala)-di-trans,octa-cis-undecaprenyl diphosphate + UMP. It participates in cell wall biogenesis; peptidoglycan biosynthesis. In terms of biological role, catalyzes the initial step of the lipid cycle reactions in the biosynthesis of the cell wall peptidoglycan: transfers peptidoglycan precursor phospho-MurNAc-pentapeptide from UDP-MurNAc-pentapeptide onto the lipid carrier undecaprenyl phosphate, yielding undecaprenyl-pyrophosphoryl-MurNAc-pentapeptide, known as lipid I. This chain is Phospho-N-acetylmuramoyl-pentapeptide-transferase, found in Staphylococcus haemolyticus (strain JCSC1435).